A 379-amino-acid chain; its full sequence is Cytochrome b (379 aa).

The next 4 membrane-spanning stretches (helical) occupy residues 34 to 54, 78 to 99, 114 to 134, and 179 to 199; these read FGSL…LLAM, WLIR…YLHI, WNTG…GYVL, and FFAL…IHLT. Heme b is bound by residues His-84 and His-98. His-183 and His-197 together coordinate heme b. His-202 contacts a ubiquinone. 4 consecutive transmembrane segments (helical) span residues 227–247, 289–309, 321–341, and 348–368; these read LKDI…AFFS, LGGV…PFLH, LSQM…WIGS, and FIII…ILFP.

Belongs to the cytochrome b family. In terms of assembly, the cytochrome bc1 complex contains 11 subunits: 3 respiratory subunits (MT-CYB, CYC1 and UQCRFS1), 2 core proteins (UQCRC1 and UQCRC2) and 6 low-molecular weight proteins (UQCRH/QCR6, UQCRB/QCR7, UQCRQ/QCR8, UQCR10/QCR9, UQCR11/QCR10 and a cleavage product of UQCRFS1). This cytochrome bc1 complex then forms a dimer. Heme b serves as cofactor.

It is found in the mitochondrion inner membrane. Functionally, component of the ubiquinol-cytochrome c reductase complex (complex III or cytochrome b-c1 complex) that is part of the mitochondrial respiratory chain. The b-c1 complex mediates electron transfer from ubiquinol to cytochrome c. Contributes to the generation of a proton gradient across the mitochondrial membrane that is then used for ATP synthesis. The protein is Cytochrome b (MT-CYB) of Dromaius novaehollandiae (Emu).